Reading from the N-terminus, the 239-residue chain is Ribose-5-phosphate isomerase A (239 aa).

Substrate-binding positions include 40 to 43 (SGST), 96 to 99 (DGAD), and 110 to 113 (KGGG). The active-site Proton acceptor is glutamate 119. Lysine 137 lines the substrate pocket.

The protein belongs to the ribose 5-phosphate isomerase family. As to quaternary structure, homodimer.

The catalysed reaction is aldehydo-D-ribose 5-phosphate = D-ribulose 5-phosphate. It participates in carbohydrate degradation; pentose phosphate pathway; D-ribose 5-phosphate from D-ribulose 5-phosphate (non-oxidative stage): step 1/1. In terms of biological role, catalyzes the reversible conversion of ribose-5-phosphate to ribulose 5-phosphate. The polypeptide is Ribose-5-phosphate isomerase A (Methanococcus maripaludis (strain C5 / ATCC BAA-1333)).